The chain runs to 883 residues: Phosphoenolpyruvate carboxylase (883 aa).

Active-site residues include His138 and Lys546.

This sequence belongs to the PEPCase type 1 family. Mg(2+) is required as a cofactor.

It catalyses the reaction oxaloacetate + phosphate = phosphoenolpyruvate + hydrogencarbonate. Functionally, forms oxaloacetate, a four-carbon dicarboxylic acid source for the tricarboxylic acid cycle. The sequence is that of Phosphoenolpyruvate carboxylase from Shigella flexneri.